The primary structure comprises 372 residues: Phospho-N-acetylmuramoyl-pentapeptide-transferase (372 aa).

A run of 10 helical transmembrane segments spans residues 25–45 (RSLL…PIMI), 73–93 (TMGG…WADL), 98–118 (VWIV…DDWI), 134–154 (FFWT…IATQ), 176–196 (SIPL…YLVI), 211–231 (GLAI…AYLS), 251–271 (LVVI…YNAH), 275–295 (VFMG…IAVM), 300–320 (IVFA…FLQI), and 349–369 (QVVI…LMTL).

The protein belongs to the glycosyltransferase 4 family. MraY subfamily. It depends on Mg(2+) as a cofactor.

It is found in the cell inner membrane. It carries out the reaction UDP-N-acetyl-alpha-D-muramoyl-L-alanyl-gamma-D-glutamyl-meso-2,6-diaminopimeloyl-D-alanyl-D-alanine + di-trans,octa-cis-undecaprenyl phosphate = di-trans,octa-cis-undecaprenyl diphospho-N-acetyl-alpha-D-muramoyl-L-alanyl-D-glutamyl-meso-2,6-diaminopimeloyl-D-alanyl-D-alanine + UMP. It participates in cell wall biogenesis; peptidoglycan biosynthesis. Functionally, catalyzes the initial step of the lipid cycle reactions in the biosynthesis of the cell wall peptidoglycan: transfers peptidoglycan precursor phospho-MurNAc-pentapeptide from UDP-MurNAc-pentapeptide onto the lipid carrier undecaprenyl phosphate, yielding undecaprenyl-pyrophosphoryl-MurNAc-pentapeptide, known as lipid I. This is Phospho-N-acetylmuramoyl-pentapeptide-transferase from Acinetobacter baumannii (strain AB0057).